The following is an 863-amino-acid chain: KFIGRVNLKECFKSATLIHSSDPDFQILEDGSVYTTHAILLSSEKSSFTILLSNTETQEEKEILVLLEHQTKVLKKRHSQEKVLRRAKRRWAPIPCSVPENSLGPFPLFLQQIQSDTAQNYTIYYSISGPGVDKEPRNLFYVERDTGNLFCTASIDRETYPLFELVAFATTPDGYTPEYPLTLVIRIEDENDNAPIFTETSYSFEVFENSKVGTTVGQVCATDQDEPDTLHTRLKYSIIEQFPALPTLFSMHPTTGVITTSSSKLDRELIDKYQLKIKVQDMDGQYFGLQTTAICIINIEDVNDNLPTFTRSSYVASVEENRIDVEILRVAVRDKDLINTANWRANYTILKGNEDGNFKIVTDSQTNEGVLCVVKPLNYEEKQQVTLEIGVVNEAPYTGTSRSTTNMATVTVNVQNQDEGPECDPRVQTVRIKENVPVGTKTIGYKAYDPETGSSSGIRYKKSSDPEGWVDVDKNSGVITILKRLDREARSGVYNISIIASDKDGRTCNGVLGIVLEDVNDNGPVIPQRTVVICKTVMSSAEIVAVDPDEPIHGPPFDFSLEGVSDSEVLRMWRLTKVNDTAARLSYLNDLRFGKYTVPVRVTDRLGQSLVTQLVVILCDCVTPNDCSFRPVSRTGNREVILGKWAILAILLGIALLFCILFTLVCGATTGADKKPKVFPDDLAQQNLIVSNTEAPGDDKVYSTNDFTTHAVGGSAHGIGGTLGSRVKNGGQETIEMVKGGHQTMESCQETGHDHTLERCKEGGQHTLDSCRGGPVATDNCKYTYSEWYTYTQPRLGEKVQQCDQDNTHMQAQDYVLTYNYEGRGSAAGSVGCCSERQEEDGLEFLDHLGPKFRTLAETCMKR.

Positions 1–89 (KFIGRVNLKE…QEKVLRRAKR (89 aa)) are excised as a propeptide. Cadherin domains follow at residues 90-197 (RWAP…APIF), 198-309 (TETS…LPTF), 310-423 (TRSS…GPEC), 424-528 (DPRV…VIPQ), and 529-644 (RTVV…ILGK). Residues 90 to 644 (RWAPIPCSVP…TGNREVILGK (555 aa)) are Extracellular-facing. An N-linked (GlcNAc...) asparagine glycan is attached at Asn-120. Asn-346, Asn-495, and Asn-579 each carry an N-linked (GlcNAc...) asparagine glycan. The chain crosses the membrane as a helical span at residues 645-665 (WAILAILLGIALLFCILFTLV). Residues 666–863 (CGATTGADKK…RTLAETCMKR (198 aa)) are Cytoplasmic-facing. Residues Ser-826, Ser-830, and Ser-835 each carry the phosphoserine modification.

As to quaternary structure, interacts with DSP, PKP2 and JUP. Interacts with DSG3; the interaction may limit the interaction of DSC3 with p38MAPK family members and therefore repress p38MAPK signaling activation. In terms of tissue distribution, expressed in esophagus and rumen. Weakly expressed in epithelia and cardiac muscle.

It is found in the cell membrane. The protein localises to the cell junction. It localises to the desmosome. A component of desmosome cell-cell junctions which are required for positive regulation of cellular adhesion. Promotes timely incorporation of DSG2 into desmosome intercellular junctions and promotes interaction of desmosome cell junctions with intermediate filament cytokeratin, via modulation of DSP phosphorylation. Plays an important role in desmosome-mediated maintenance of intestinal epithelial cell intercellular adhesion strength and barrier function. Positively regulates wound healing of intestinal mucosa via promotion of epithelial cell migration, and also plays a role in mechanotransduction of force between intestinal epithelial cells and extracellular matrix. May contribute to epidermal cell positioning (stratification) by mediating differential adhesiveness between cells that express different isoforms. This Bos taurus (Bovine) protein is Desmocollin-2 (DSC2).